The following is a 381-amino-acid chain: S-(hydroxymethyl)glutathione dehydrogenase (381 aa).

Position 49 (Cys49) interacts with Zn(2+). An NAD(+)-binding site is contributed by His50. Residues His71, Glu72, Cys101, Cys104, Cys107, Cys115, and Cys178 each coordinate Zn(2+). NAD(+) contacts are provided by residues 203–208 (GGGIVG), Asp227, and 298–300 (IGV).

Belongs to the zinc-containing alcohol dehydrogenase family. Class-III subfamily. The cofactor is Zn(2+).

The catalysed reaction is a primary alcohol + NAD(+) = an aldehyde + NADH + H(+). The enzyme catalyses a secondary alcohol + NAD(+) = a ketone + NADH + H(+). It catalyses the reaction S-(hydroxymethyl)glutathione + NADP(+) = S-formylglutathione + NADPH + H(+). It carries out the reaction S-(hydroxymethyl)glutathione + NAD(+) = S-formylglutathione + NADH + H(+). The catalysed reaction is S-nitrosoglutathione + NADH + H(+) = S-(hydroxysulfenamide)glutathione + NAD(+). In terms of biological role, oxidizes long-chain alcohols and, in the presence of glutathione, is able to oxidize formaldehyde. Also acts as a S-nitroso-glutathione reductase by catalyzing the NADH-dependent reduction of S-nitrosoglutathione, thereby regulating protein S-nitrosylation. The polypeptide is S-(hydroxymethyl)glutathione dehydrogenase (FDH1) (Candida maltosa (Yeast)).